Reading from the N-terminus, the 680-residue chain is DNA-directed RNA polymerase subunit beta' (680 aa).

Zn(2+) contacts are provided by C69, C71, C87, and C90. Residues D489, D491, and D493 each coordinate Mg(2+).

The protein belongs to the RNA polymerase beta' chain family. RpoC1 subfamily. As to quaternary structure, in plastids the minimal PEP RNA polymerase catalytic core is composed of four subunits: alpha, beta, beta', and beta''. When a (nuclear-encoded) sigma factor is associated with the core the holoenzyme is formed, which can initiate transcription. Requires Mg(2+) as cofactor. Zn(2+) is required as a cofactor.

It is found in the plastid. The protein resides in the chloroplast. The enzyme catalyses RNA(n) + a ribonucleoside 5'-triphosphate = RNA(n+1) + diphosphate. Its function is as follows. DNA-dependent RNA polymerase catalyzes the transcription of DNA into RNA using the four ribonucleoside triphosphates as substrates. This is DNA-directed RNA polymerase subunit beta' from Nasturtium officinale (Watercress).